Here is a 327-residue protein sequence, read N- to C-terminus: MGVKLKDIIQPEQIDFKDLKGRAISIDAFNTLYQFLSTIRQRDGRPLSDSNGNITSHLSGILYRNSSMIEKDIKPIYVFDGTPSYLKQETIDQRRQTREESEKKWKEALAKQDTQEARKYAMRSSKLSPYIIESSKKLLTMMGIPYIEAYGEGEAQAAYLVENGDAWAVASQDYDCLLFGAKRVVRNLAINSNLGDLEYYNLKRVLDELDINREQLIDMGILIGTDFSEGLKGVGAKTALKLAKKGELENKLAKLQEESSHDISEVREIFLNHNVNTNYKIRWKKPAKNDIIDFLCEEHGFSQDRVSKACDKLKNLNSSQKSLEDWF.

An N-domain region spans residues 1 to 98 (MGVKLKDIIQ…ETIDQRRQTR (98 aa)). Mg(2+) is bound by residues D27, D80, E152, E154, D173, D175, and D226. An I-domain region spans residues 116–246 (EARKYAMRSS…KTALKLAKKG (131 aa)). The interval 319 to 327 (SQKSLEDWF) is interaction with PCNA.

Belongs to the XPG/RAD2 endonuclease family. FEN1 subfamily. Interacts with PCNA. PCNA stimulates the nuclease activity without altering cleavage specificity. The cofactor is Mg(2+).

In terms of biological role, structure-specific nuclease with 5'-flap endonuclease and 5'-3' exonuclease activities involved in DNA replication and repair. During DNA replication, cleaves the 5'-overhanging flap structure that is generated by displacement synthesis when DNA polymerase encounters the 5'-end of a downstream Okazaki fragment. Binds the unpaired 3'-DNA end and kinks the DNA to facilitate 5' cleavage specificity. Cleaves one nucleotide into the double-stranded DNA from the junction in flap DNA, leaving a nick for ligation. Also involved in the base excision repair (BER) pathway. Acts as a genome stabilization factor that prevents flaps from equilibrating into structures that lead to duplications and deletions. Also possesses 5'-3' exonuclease activity on nicked or gapped double-stranded DNA. The sequence is that of Flap endonuclease 1 from Methanobrevibacter smithii (strain ATCC 35061 / DSM 861 / OCM 144 / PS).